A 379-amino-acid polypeptide reads, in one-letter code: Stimulator of interferon genes protein (379 aa).

Over 1-17 (MPYSNLHPSIPRPRSYR) the chain is Cytoplasmic. Residues 1 to 190 (MPYSNLHPSI…MFNQLHNNML (190 aa)) are mediates interaction with ZDHHC1 and ZDHHC11. Residues 18 to 34 (FKLAAFVLLVGSLMSLW) form a helical membrane-spanning segment. Residues 35 to 44 (MTGEPPSHTL) lie on the Lumenal side of the membrane. The chain crosses the membrane as a helical span at residues 45-69 (HYLALHVASQQLGLLLKKLCCLAEE). The Cytoplasmic segment spans residues 70–91 (LCHVQSRYQGSYWKAVRACVGS). C88 carries S-palmitoyl cysteine lipidation. Residues 92–106 (PICFMALILLSFYFY) traverse the membrane as a helical segment. Topologically, residues 107–116 (CSLENTSDLR) are lumenal. A helical membrane pass occupies residues 117–134 (LAWHLGILVLSKSLSMTL). Over 135-379 (DLQSLAPAEV…QPLPLRTDLI (245 aa)) the chain is Cytoplasmic. A Glycyl lysine isopeptide (Lys-Gly) (interchain with G-Cter in ubiquitin) cross-link involves residue K151. The interval 153–340 (FNVAHGLAWS…RHIRQEEKEE (188 aa)) is cyclic dinucleotide-binding domain (CBD). 162–167 (SYYIGY) contacts 2',3'-cGAMP. G166 is a binding site for 3',3'-c-di-GMP. Y167 contacts 2',3'-cUAMP. Residue K236 forms a Glycyl lysine isopeptide (Lys-Gly) (interchain with G-Cter in ubiquitin) linkage. R238 serves as a coordination point for 2',3'-cUAMP. Residues 238-241 (RAYS) and T263 each bind 2',3'-cGAMP. 3',3'-c-di-GMP is bound by residues 238-241 (RAYS) and T263. Residue S241 is modified to Phosphoserine. Residue T263 participates in 2',3'-cUAMP binding. K338 is covalently cross-linked (Glycyl lysine isopeptide (Lys-Gly) (interchain with G-Cter in SUMO)). The interval 340–379 (EVTMSGPPTSVAPRPSLLSQEPRLLISGMEQPLPLRTDLI) is C-terminal tail (CTT). Residue S355 is modified to Phosphoserine. Phosphoserine; by TBK1 is present on residues S358 and S366. A pLxIS motif motif is present at residues 363 to 366 (LLIS).

Belongs to the STING family. As to quaternary structure, homodimer; forms a homodimer in absence of cyclic nucleotide (c-di-GMP or cGAMP); 'Lys-63'-linked ubiquitination at Lys-151 is required for homodimerization. Homotetramer; in presence of cyclic nucleotide (c-di-GMP or cGAMP), forms tetramers and higher-order oligomers through side-by-side packing. Interacts (when phosphorylated) with IRF3; following activation and phosphorylation on the pLxIS motif by TBK1, recruits IRF3. Interacts with RIGI, MAVS and SSR2. Interacts with RNF5 and TRIM56. Interacts with TBK1; when homodimer, leading to subsequent production of IFN-beta. Interacts with IFIT1 and IFIT2. Interacts with TRIM29; this interaction induces STING1 ubiquitination and subsequent degradation. Associates with the MHC-II complex. Interacts with STEEP1; interaction takes place upon cGAMP-activation and STING1 phosphorylation by MAP3K7/TAK1 and promotes STING1 translocation to COPII vesicles. Interacts with SEC24A, SEC24B and SEC24C; promoting translocation to COPII vesicles. Interacts (when ubiquitinated) with SQSTM1; leading to relocalization to autophagosomes. Interacts with SURF4. Interacts with HNRNPA2B1. Interacts with ZDHHC1; ZDHHC1 constitutively interacts with STING1 and in presence of DNA viruses activates it by promoting its cGAMP-induced oligomerization and the recruitment of downstream signaling components. Interacts with ZDHHC11; in presence of DNA viruses promotes the recruitment of IRF3 to STING1. Interacts with TOMM70. Interacts with TAB1; promoting recruitment of TAB1 to the endoplasmic reticulum membrane and subsequent activation of MAP3K7/TAK1. Interacts (via transmembrane domain) with TMEM203. Interacts with DDX41. Post-translationally, phosphorylation by TBK1 leads to activation and production of IFN-beta. Following cyclic nucleotide (c-di-GMP or cGAMP)-binding, activation and translocation from the endoplasmic reticulum, STING1 is phosphorylated by TBK1 at Ser-366 in the pLxIS motif. The phosphorylated pLxIS motif constitutes an IRF3-binding motif, leading to recruitment of the transcription factor IRF3 to induce type-I interferons and other cytokines. Phosphorylated on tyrosine residues upon MHC-II aggregation. Dephosphorylation by PPP6C leads to inactivation and decreased production of IFN-beta. Phosphorylation at Ser-358 is also required to activate IRF3. Phosphorylation at Ser-355 by MAP3K7/TAK1 facilitates its interaction with STEEP1, promoting STING1 translocation to COPII vesicles. In terms of processing, ubiquitinated. Ubiquitinated via 'Lys-63'-linked ubiquitin chains in response to double-stranded DNA treatment, leading to relocalization to autophagosomes and subsequent degradation; this process is dependent on SQSTM1. 'Lys-63'-linked ubiquitination mediated by TRIM56 at Lys-151 promotes homodimerization and recruitment of the antiviral kinase TBK1 and subsequent production of IFN-beta. 'Lys-48'-linked polyubiquitination at Lys-151 occurring after viral infection is mediated by RNF5 and leads to proteasomal degradation. 'Lys-11'-linked polyubiquitination at Lys-151 by RNF26 leads to stabilize STING1: it protects STING1 from RNF5-mediated 'Lys-48'-linked polyubiquitination. 'Lys-33'-linked and 'Lys-48'-linked deubiquitinated by USP20; leading to its stabilization and promotion of innate antiviral response. 'Lys-48'-linked deubiquitinated by USP44; leading to its stabilization and promotion of innate antiviral response. Deubiquitinated by USP13; leading to inhibition of innate antiviral response. 'Lys-63'-linked deubiquitinated by USP49; leading to inhibition of the subsequent recruitment of TBK1 to the signaling complex. 'Lys-63'-linked ubiquitination mediated by RNF39 promotes the activation of the cGAS-STING pathway. Sumoylated at Lys-338 by TRIM38 during the early phase of viral infection, promoting its stability by preventing its relocalization to autophagosomes and subsequent degradation. Desumoylated by SENP2 during the late phase of viral infection. Post-translationally, palmitoylation takes place in the Golgi apparatus and creates a platform for the recruitment of TBK1.

It localises to the endoplasmic reticulum membrane. Its subcellular location is the cytoplasm. The protein resides in the perinuclear region. It is found in the endoplasmic reticulum-Golgi intermediate compartment membrane. The protein localises to the golgi apparatus membrane. It localises to the cytoplasmic vesicle. Its subcellular location is the autophagosome membrane. The protein resides in the mitochondrion outer membrane. It is found in the cell membrane. It catalyses the reaction H(+)(in) = H(+)(out). With respect to regulation, in contrast to mouse protein, not activated by anticancer molecule 5,6-dimethylxanthenone 4-acetic acid (DMXAA). Its function is as follows. Facilitator of innate immune signaling that acts as a sensor of cytosolic DNA from bacteria and viruses and promotes the production of type I interferon (IFN-alpha and IFN-beta). Innate immune response is triggered in response to non-CpG double-stranded DNA from viruses and bacteria delivered to the cytoplasm. Acts by binding cyclic dinucleotides: recognizes and binds cyclic di-GMP (c-di-GMP), a second messenger produced by bacteria, cyclic UMP-AMP (2',3'-cUAMP), and cyclic GMP-AMP (cGAMP), a messenger produced by CGAS in response to DNA virus in the cytosol. Upon binding to c-di-GMP, cUAMP or cGAMP, STING1 oligomerizes, translocates from the endoplasmic reticulum and is phosphorylated by TBK1 on the pLxIS motif, leading to recruitment and subsequent activation of the transcription factor IRF3 to induce expression of type I interferon and exert a potent anti-viral state. Exhibits 2',3' phosphodiester linkage-specific ligand recognition: can bind both 2'-3' linked cGAMP (2'-3'-cGAMP) and 3'-3' linked cGAMP but is preferentially activated by 2'-3' linked cGAMP. The preference for 2'-3'-cGAMP, compared to other linkage isomers is probably due to the ligand itself, whichs adopts an organized free-ligand conformation that resembles the STING1-bound conformation and pays low energy costs in changing into the active conformation. In addition to promote the production of type I interferons, plays a direct role in autophagy. Following cGAMP-binding, STING1 buds from the endoplasmic reticulum into COPII vesicles, which then form the endoplasmic reticulum-Golgi intermediate compartment (ERGIC). The ERGIC serves as the membrane source for WIPI2 recruitment and LC3 lipidation, leading to formation of autophagosomes that target cytosolic DNA or DNA viruses for degradation by the lysosome. Promotes autophagy by acting as a proton channel that directs proton efflux from the Golgi to facilitate MAP1LC3B/LC3B lipidation. The autophagy- and interferon-inducing activities can be uncoupled and autophagy induction is independent of TBK1 phosphorylation. Autophagy is also triggered upon infection by bacteria: following c-di-GMP-binding, which is produced by live Gram-positive bacteria, promotes reticulophagy. May be involved in translocon function, the translocon possibly being able to influence the induction of type I interferons. May be involved in transduction of apoptotic signals via its association with the major histocompatibility complex class II (MHC-II). The sequence is that of Stimulator of interferon genes protein from Rattus norvegicus (Rat).